A 319-amino-acid polypeptide reads, in one-letter code: Guanosine ABC transporter permease protein NupQ (319 aa).

A run of 9 helical transmembrane segments spans residues 6 to 26, 39 to 59, 65 to 85, 99 to 119, 159 to 179, 204 to 224, 235 to 255, 257 to 277, and 282 to 302; these read ILSI…LTAL, IGLE…NLFF, AAAP…FSLI, VSGV…VKLI, ILAI…PFGL, IGVM…ASTI, GQGF…IGAL, AALF…LPLF, and NVYM…GFIG.

This sequence belongs to the binding-protein-dependent transport system permease family. As to quaternary structure, the complex is composed of two ATP-binding proteins (NupO), two transmembrane proteins (NupP and NupQ) and a solute-binding protein (NupN).

Its subcellular location is the cell membrane. Functionally, part of an ABC transporter complex involved in the uptake of guanosine. Responsible for the translocation of the substrate across the membrane. May be a nucleoside transporter of broad specificity but with various affinities for different substrates. The protein is Guanosine ABC transporter permease protein NupQ of Bacillus subtilis (strain 168).